A 321-amino-acid polypeptide reads, in one-letter code: Protein OPG049 (321 aa).

An N-terminal signal peptide occupies residues 1–20 (MGTNGVRVFVILYLLAVCGC). N-linked (GlcNAc...) asparagine; by host glycosylation is found at Asn-36, Asn-41, Asn-72, Asn-79, Asn-108, Asn-144, Asn-220, and Asn-245. Residues 286-306 (LIMIVLITMLSIILVIIVVIA) traverse the membrane as a helical segment.

The protein belongs to the orthopoxvirus OPG049 family.

Its subcellular location is the host cell membrane. Functionally, plays a role in the spread of virus to neighboring cells ex vivo. This Homo sapiens (Human) protein is Protein OPG049 (OPG049).